We begin with the raw amino-acid sequence, 345 residues long: Protein RecA (345 aa).

66 to 73 (GPESSGKT) serves as a coordination point for ATP.

It belongs to the RecA family.

It localises to the cytoplasm. In terms of biological role, can catalyze the hydrolysis of ATP in the presence of single-stranded DNA, the ATP-dependent uptake of single-stranded DNA by duplex DNA, and the ATP-dependent hybridization of homologous single-stranded DNAs. It interacts with LexA causing its activation and leading to its autocatalytic cleavage. The chain is Protein RecA from Acidithiobacillus ferrooxidans (strain ATCC 23270 / DSM 14882 / CIP 104768 / NCIMB 8455) (Ferrobacillus ferrooxidans (strain ATCC 23270)).